The primary structure comprises 467 residues: Flagellar hook-associated protein 2 (467 aa).

A coiled-coil region spans residues 411-439; sequence VNATLKSLTKQYLSVSNSIDETVARYKAQ.

Belongs to the FliD family. In terms of assembly, homopentamer.

It is found in the secreted. Its subcellular location is the bacterial flagellum. In terms of biological role, required for the morphogenesis and for the elongation of the flagellar filament by facilitating polymerization of the flagellin monomers at the tip of growing filament. Forms a capping structure, which prevents flagellin subunits (transported through the central channel of the flagellum) from leaking out without polymerization at the distal end. This chain is Flagellar hook-associated protein 2 (fliD), found in Salmonella typhimurium (strain LT2 / SGSC1412 / ATCC 700720).